The sequence spans 246 residues: Virulence plasmid protein pGP6-D (246 aa).

Belongs to the UPF0137 (pGP6-D) family.

The sequence is that of Virulence plasmid protein pGP6-D from Chlamydia muridarum (strain MoPn / Nigg).